The sequence spans 232 residues: Beta-casein (232 aa).

A signal peptide spans 1–15; the sequence is MKLLILACFVALALA. Asparagine 22 carries an N-linked (GlcNAc...) asparagine glycan. At serine 24 the chain carries Phosphoserine. At threonine 27 the chain carries Phosphothreonine. Phosphoserine is present on residues serine 30, serine 32, serine 33, and serine 34. The span at 48–63 shows a compositional bias: basic and acidic residues; sequence KLKREEQQQTENERQN. The segment at 48 to 74 is disordered; the sequence is KLKREEQQQTENERQNKIHQFPQPQPL.

The protein belongs to the beta-casein family. As to expression, mammary gland specific. Secreted in milk.

The protein localises to the secreted. Functionally, important role in determination of the surface properties of the casein micelles. In Sus scrofa (Pig), this protein is Beta-casein (CSN2).